The chain runs to 48 residues: U-actitoxin-Cgg3 (48 aa).

3 disulfide bridges follow: Cys-5/Cys-41, Cys-7/Cys-33, and Cys-23/Cys-42. Ser-46 carries the post-translational modification Serine amide. A propeptide spans 47–48 (GR) (removed in mature form).

The protein belongs to the sea anemone type 3 (BDS) potassium channel toxin family.

Its subcellular location is the secreted. Functionally, neurotoxin that induces paralysis when injected into crabs. May function in antimicrobial activity as it displays inhibitory activity towards the B.licheniformis enzyme subtilisin A (SUBTA) and the recombinant S.maltophilia protease 1 (rStmPr1) enzyme. Also displays inhibitory activity against various proteases including the porcine pancreatic elastase (PPE) and proteinase K (PK). The polypeptide is U-actitoxin-Cgg3 (Condylactis gigantea (Giant Caribbean anemone)).